The primary structure comprises 463 residues: Asparagine--tRNA ligase (463 aa).

The protein belongs to the class-II aminoacyl-tRNA synthetase family. As to quaternary structure, homodimer.

Its subcellular location is the cytoplasm. It catalyses the reaction tRNA(Asn) + L-asparagine + ATP = L-asparaginyl-tRNA(Asn) + AMP + diphosphate + H(+). This chain is Asparagine--tRNA ligase, found in Acholeplasma laidlawii (strain PG-8A).